Here is a 512-residue protein sequence, read N- to C-terminus: Cytochrome P450 monooxygenase astB (512 aa).

Residues 5–25 traverse the membrane as a helical segment; the sequence is DLSFPAAIGAVFGAVAISVAA. Residue Cys-452 coordinates heme.

The protein belongs to the cytochrome P450 family. The cofactor is heme.

The protein resides in the membrane. It functions in the pathway secondary metabolite biosynthesis; terpenoid biosynthesis. Cytochrome P450 monooxygenase; part of the gene cluster that mediates the biosynthesis of the sesquiterpenoid aspterric acid (AA), an inhibitor of dihydroxy-acid dehydratase (DHAD) effective as an herbicide. AstB catalyzes the second step within the pathway and converts (-)-daucane produced by the terpene cyclase astA into an alpha-epoxy carboxylate intermediate which is further converted into the tricyclic aspterric acid by the cytochrome P450 monooxygenase astC. This Aspergillus terreus (strain NIH 2624 / FGSC A1156) protein is Cytochrome P450 monooxygenase astB.